Consider the following 266-residue polypeptide: Na(+)-translocating NADH-quinone reductase subunit C (266 aa).

Residues 16-36 (LLVVVILCLVCSVVVAGAAVG) form a helical membrane-spanning segment. Thr-232 carries the FMN phosphoryl threonine modification.

This sequence belongs to the NqrC family. Composed of six subunits; NqrA, NqrB, NqrC, NqrD, NqrE and NqrF. The cofactor is FMN.

It is found in the cell inner membrane. It catalyses the reaction a ubiquinone + n Na(+)(in) + NADH + H(+) = a ubiquinol + n Na(+)(out) + NAD(+). NQR complex catalyzes the reduction of ubiquinone-1 to ubiquinol by two successive reactions, coupled with the transport of Na(+) ions from the cytoplasm to the periplasm. NqrA to NqrE are probably involved in the second step, the conversion of ubisemiquinone to ubiquinol. The protein is Na(+)-translocating NADH-quinone reductase subunit C of Yersinia pestis.